Consider the following 398-residue polypeptide: MKITSSAAALALVASAVAAPSPTTQDKPTKRQAGCASAVSLNAQTNVFKQYTLHANNFYRKEIEELAIPNLSDPSLEAAARKVADTGSFVWLDTIANVDRLEPALAEVPCNEILGVVVYDLPGRDCAAKASNGELKVGELNRYKTEFIDRIASILKAHPNTAVALVIEPDSLPNLVTNSDVQACRNSAAGYRDGVAYALKTLNLPNVVQYIDAGHGGWLGWDANLKPGAEELAKAYKAAGSPKQFRGIATNVAGWNAWDLSPGEFSSASDAKYNSCQNERTYVNTFGQRLKAAGMPNHAIVDTGRNGVQGLREEWGNWCNVDGAGFGRPPSADTGLELADAFVWVKPGGESDGTSDSSAVRYDSFCGKPDAFQPSPEAGAWHQEYFEMLLRNSNPSLL.

A signal peptide spans 1-18 (MKITSSAAALALVASAVA). A glycan (N-linked (GlcNAc...) asparagine) is linked at asparagine 70. The active site involves aspartate 125. Residue aspartate 170 is the Proton donor of the active site. Residues tryptophan 218, tryptophan 318, lysine 346, and glutamate 350 each contribute to the substrate site.

Belongs to the glycosyl hydrolase 6 (cellulase B) family. In terms of processing, both N- and O-glycosylated.

The protein resides in the secreted. The catalysed reaction is Hydrolysis of (1-&gt;4)-beta-D-glucosidic linkages in cellulose and cellotetraose, releasing cellobiose from the non-reducing ends of the chains.. Exoglucanase that plays an important function in biomass degradation by catalyzing the hydrolysis of the non-reducing end beta-1,4-glucosidic linkages in cellulose and cellotetraose to release cellobiose. Hydrolyzes crystalline and amorphous cellulose but is inactive on hydroxyethyl cellulose, mannan, galactomannan, xyloglucan, arabinoxylan, arabinan, xylan, and pectin. The polypeptide is 1,4-beta-D-glucan cellobiohydrolase CEL6C (Podospora anserina (strain S / ATCC MYA-4624 / DSM 980 / FGSC 10383) (Pleurage anserina)).